The following is a 316-amino-acid chain: MAEAALEAVRRALQEFPAAARDLNVPRVVPYLDEPPSPLCFYRDWVCPNRPCIIRNALQHWPALQKWSLSYLRATVGSTEVSVAVTPDGYADAVRGDRFVMPAERRLPISHVLDVLEGRAQHPGVLYVQKQCSNLPTELPQLLSDIESHVPWASESLGKMPDAVNFWLGDASAVTSLHKDHYENLYCVVSGEKHFLLHPPSDRPFIPYNLYTPATYQLTEEGTFRVVDEEAMEKVPWIPLDPLAPDLTQYPSYSQAQALHCTVRAGEMLYLPALWFHHVQQSHGCIAVNFWYDMEYDLKYSYFQLMDTLTRATGLD.

Residues 128-307 form the JmjC domain; sequence VQKQCSNLPT…LKYSYFQLMD (180 aa). Residues histidine 178, aspartate 180, and histidine 277 each coordinate Fe cation.

Homodimer; disulfide-linked. Interacts with DRG1 and DRG2. It depends on Fe(2+) as a cofactor.

The protein resides in the nucleus. Its subcellular location is the cytoplasm. The enzyme catalyses L-lysyl-[protein] + 2-oxoglutarate + O2 = (3S)-3-hydroxy-L-lysyl-[protein] + succinate + CO2. Its function is as follows. Bifunctional enzyme that acts both as an endopeptidase and 2-oxoglutarate-dependent monooxygenase. Endopeptidase that cleaves histones N-terminal tails at the carboxyl side of methylated arginine or lysine residues, to generate 'tailless nucleosomes', which may trigger transcription elongation. Preferentially recognizes and cleaves monomethylated and dimethylated arginine residues of histones H2, H3 and H4. After initial cleavage, continues to digest histones tails via its aminopeptidase activity. Additionally, may play a role in protein biosynthesis by modifying the translation machinery. Acts as a Fe(2+) and 2-oxoglutarate-dependent monooxygenase, catalyzing (S)-stereospecific hydroxylation at C-3 of 'Lys-22' of DRG1 and 'Lys-21' of DRG2 translation factors (TRAFAC), promoting their interaction with ribonucleic acids (RNA). The protein is Bifunctional peptidase and (3S)-lysyl hydroxylase Jmjd7 of Mus musculus (Mouse).